The primary structure comprises 720 residues: Secreted RxLR effector protein 138 (720 aa).

A signal peptide spans 1-20; sequence MRSAFYVAIVLLVAAGSQTA. The short motif at 56-71 is the RxLR-dEER element; the sequence is RNLKDDFMFSAGDEER. The tract at residues 264–335 is disordered; it reads ESNTRKRNNV…VAPPEPSRLD (72 aa). Basic and acidic residues predominate over residues 320-335; it reads KQHDHRVAPPEPSRLD. The N-linked (GlcNAc...) asparagine glycan is linked to asparagine 609.

The protein belongs to the RxLR effector family.

The protein localises to the secreted. The protein resides in the host nucleus. Secreted effector that acts as an elicitor that induces cell death in host plant cells. The sequence is that of Secreted RxLR effector protein 138 from Plasmopara viticola (Downy mildew of grapevine).